We begin with the raw amino-acid sequence, 124 residues long: uncharacterized protein (124 aa).

This is an uncharacterized protein from Bacillus subtilis (strain 168).